A 545-amino-acid chain; its full sequence is Gamma-curcumene synthase (545 aa).

Mg(2+) is bound by residues D299, D303, N442, and E450. Positions 299-303 (DDTYD) match the DDXXD motif motif.

This sequence belongs to the terpene synthase family. Requires Mg(2+) as cofactor.

Its subcellular location is the cytoplasm. It localises to the cytosol. The catalysed reaction is (2E,6E)-farnesyl diphosphate = gamma-curcumene + diphosphate. It functions in the pathway secondary metabolite biosynthesis; terpenoid biosynthesis. Functionally, sesquiterpene synthase involved in gamma-curcumene biosynthesis. The protein is Gamma-curcumene synthase of Pogostemon cablin (Patchouli).